Reading from the N-terminus, the 271-residue chain is Phosphate import ATP-binding protein PstB (271 aa).

The 242-residue stretch at 25–266 (FDTKNLNLWY…PSDKRTEDYI (242 aa)) folds into the ABC transporter domain. Position 57-64 (57-64 (GPSGCGKS)) interacts with ATP.

This sequence belongs to the ABC transporter superfamily. Phosphate importer (TC 3.A.1.7) family. In terms of assembly, the complex is composed of two ATP-binding proteins (PstB), two transmembrane proteins (PstC and PstA) and a solute-binding protein (PstS).

Its subcellular location is the cell membrane. The catalysed reaction is phosphate(out) + ATP + H2O = ADP + 2 phosphate(in) + H(+). Functionally, part of the ABC transporter complex PstSACB involved in phosphate import. Responsible for energy coupling to the transport system. In Bacillus cereus (strain ATCC 14579 / DSM 31 / CCUG 7414 / JCM 2152 / NBRC 15305 / NCIMB 9373 / NCTC 2599 / NRRL B-3711), this protein is Phosphate import ATP-binding protein PstB.